Consider the following 399-residue polypeptide: P2X purinoceptor 1 (399 aa).

Over M1–K28 the chain is Cytoplasmic. A helical transmembrane segment spans residues V29–V50. The Extracellular portion of the chain corresponds to Y51–G338. CTP contacts are provided by K68, K70, and K140. ATP is bound at residue K70. 3 cysteine pairs are disulfide-bonded: C117/C165, C126/C149, and C132/C159. N-linked (GlcNAc...) asparagine glycans are attached at residues N153 and N184. T186 provides a ligand contact to CTP. T186 contacts ATP. A glycan (N-linked (GlcNAc...) asparagine) is linked at N210. Intrachain disulfides connect C217/C227 and C261/C270. S286, N290, and R292 together coordinate ATP. Positions 290 and 292 each coordinate CTP. A glycan (N-linked (GlcNAc...) asparagine) is linked at N300. K309 is a CTP binding site. K309 provides a ligand contact to ATP. The interval T331 to G338 is pore-forming motif. Residues I339 to P358 traverse the membrane as a helical segment. At K359–S399 the chain is on the cytoplasmic side. The segment at M374–S399 is disordered. Residues A385–S399 are compositionally biased toward polar residues. Phosphoserine occurs at positions 387 and 388. T389 bears the Phosphothreonine mark.

Belongs to the P2X receptor family. In terms of assembly, functional P2XRs are organized as homomeric and heteromeric trimers. Homotrimer. Forms heterodimer with P2RX2. Forms heterodimer with P2RX4. Forms heterodimer with P2RX5. As to expression, high levels in vas deferens and urinary bladder. Lower extent in spinal cord, coeliac ganglion, lung and spleen (probably in the smooth muscle part of both organs).

It is found in the cell membrane. It carries out the reaction Ca(2+)(in) = Ca(2+)(out). It catalyses the reaction K(+)(in) = K(+)(out). The enzyme catalyses Na(+)(in) = Na(+)(out). With respect to regulation, activated by low concentrations of ATP (&lt;1 uM). Undergoes rapid desensitisation. Sensitives to the ATP agonist:alpha/beta-methylene-ATP. Modulated by cholesterol. Its function is as follows. ATP-gated nonselective transmembrane cation channel permeable to potassium, sodium and with relatively high calcium permeability. Furthermore, CTP functions as a weak affinity agonist for P2RX1. Plays a role a role in urogenital, immune and cardiovascular function. Specifically, plays an important role in neurogenic contraction of smooth muscle of the vas deferens, and therefore is essential for normal male reproductive function. In addition, contributes to smooth muscle contractions of the urinary bladder. On platelets, contributes to platelet activation and aggregation and thereby, also to thrombosis. On neutrophils, it is involved in chemotaxis and in mitigating the activation of circulating cells. The sequence is that of P2X purinoceptor 1 (P2rx1) from Rattus norvegicus (Rat).